The following is a 250-amino-acid chain: MAGGGGGGGRGEGEGRAATGKRERIAIRRIDNLAARQVTFSKRRRGLFKKAEELSILCDAEVGLVVFSATGKLFQFASTSMEQIIDRYNSHSKTLQRAEPSQLDLQGEDSSTCARLKEELAETSLRLRQMRGEELHRLNVEQLQELEKSLESGLGSVLKTKSKKILDEIDGLERKRMQLIEENLRLKEQLQVSRMSRMEEMQPGPDSEIVYEEGQSSESVTNASYPRPPPDNDYSSDTSLRLGLSLFSSK.

Residues 1–10 (MAGGGGGGGR) show a composition bias toward gly residues. Disordered regions lie at residues 1–20 (MAGG…AATG) and 196–250 (SRME…FSSK). Residues 11–20 (GEGEGRAATG) are compositionally biased toward basic and acidic residues. The 61-residue stretch at 20–80 (GKRERIAIRR…GKLFQFASTS (61 aa)) folds into the MADS-box domain. One can recognise a K-box domain in the interval 106-198 (QGEDSSTCAR…QLQVSRMSRM (93 aa)). Over residues 214-224 (GQSSESVTNAS) the composition is skewed to polar residues.

May interact with MADS18. Expressed in roots, shoots and developing panicles. Expressed in mature stems and leaves, flowering panicles, developing seeds, and mature seeds.

Its subcellular location is the nucleus. Its function is as follows. Transcription factor that modulates expressions of multiple genes involved in cell signaling and gene transcription. Plays a negative regulatory role in brassinosteroid signaling. This Oryza sativa subsp. japonica (Rice) protein is MADS-box transcription factor 47.